Consider the following 80-residue polypeptide: Exodeoxyribonuclease 7 small subunit (80 aa).

The protein belongs to the XseB family. As to quaternary structure, heterooligomer composed of large and small subunits.

It localises to the cytoplasm. It catalyses the reaction Exonucleolytic cleavage in either 5'- to 3'- or 3'- to 5'-direction to yield nucleoside 5'-phosphates.. Bidirectionally degrades single-stranded DNA into large acid-insoluble oligonucleotides, which are then degraded further into small acid-soluble oligonucleotides. The polypeptide is Exodeoxyribonuclease 7 small subunit (Escherichia coli O139:H28 (strain E24377A / ETEC)).